A 337-amino-acid polypeptide reads, in one-letter code: Formamidase (337 aa).

A CN hydrolase domain is found at 14–257; that stretch reads VVIGLVQLQL…DEIITAEVRP (244 aa). Glu60 (proton acceptor) is an active-site residue. Residue Lys129 is the Proton donor of the active site. The active-site Nucleophile is Cys162.

The protein belongs to the carbon-nitrogen hydrolase superfamily. Aliphatic amidase family.

It carries out the reaction formamide + H2O = formate + NH4(+). Is an aliphatic amidase with a restricted substrate specificity, as it only hydrolyzes formamide. This is Formamidase from Bradyrhizobium sp. (strain ORS 278).